We begin with the raw amino-acid sequence, 410 residues long: Peptidase T (410 aa).

Position 78 (H78) interacts with Zn(2+). D80 is an active-site residue. D139 contributes to the Zn(2+) binding site. The active-site Proton acceptor is E173. The Zn(2+) site is built by E174, D196, and H378.

This sequence belongs to the peptidase M20B family. It depends on Zn(2+) as a cofactor.

Its subcellular location is the cytoplasm. The enzyme catalyses Release of the N-terminal residue from a tripeptide.. Functionally, cleaves the N-terminal amino acid of tripeptides. The polypeptide is Peptidase T (Shewanella woodyi (strain ATCC 51908 / MS32)).